Here is a 132-residue protein sequence, read N- to C-terminus: Small ribosomal subunit protein uS8 (132 aa).

The protein belongs to the universal ribosomal protein uS8 family. As to quaternary structure, part of the 30S ribosomal subunit. Contacts proteins S5 and S12.

In terms of biological role, one of the primary rRNA binding proteins, it binds directly to 16S rRNA central domain where it helps coordinate assembly of the platform of the 30S subunit. This is Small ribosomal subunit protein uS8 from Arthrobacter sp. (strain FB24).